Here is a 489-residue protein sequence, read N- to C-terminus: Glutamyl-tRNA(Gln) amidotransferase subunit A (489 aa).

Active-site charge relay system residues include K77 and S157. S181 functions as the Acyl-ester intermediate in the catalytic mechanism.

It belongs to the amidase family. GatA subfamily. In terms of assembly, heterotrimer of A, B and C subunits.

It carries out the reaction L-glutamyl-tRNA(Gln) + L-glutamine + ATP + H2O = L-glutaminyl-tRNA(Gln) + L-glutamate + ADP + phosphate + H(+). Functionally, allows the formation of correctly charged Gln-tRNA(Gln) through the transamidation of misacylated Glu-tRNA(Gln) in organisms which lack glutaminyl-tRNA synthetase. The reaction takes place in the presence of glutamine and ATP through an activated gamma-phospho-Glu-tRNA(Gln). This is Glutamyl-tRNA(Gln) amidotransferase subunit A from Caulobacter vibrioides (strain ATCC 19089 / CIP 103742 / CB 15) (Caulobacter crescentus).